The following is a 117-amino-acid chain: Large ribosomal subunit protein bL20c (117 aa).

It belongs to the bacterial ribosomal protein bL20 family.

It localises to the plastid. The protein localises to the chloroplast. Functionally, binds directly to 23S ribosomal RNA and is necessary for the in vitro assembly process of the 50S ribosomal subunit. It is not involved in the protein synthesizing functions of that subunit. This is Large ribosomal subunit protein bL20c from Arabis hirsuta (Hairy rock-cress).